The following is an 864-amino-acid chain: MAKVSFIFVAIALITGNVLCQTDATYAVSSSAPGYKIDGHVRKTEAGLHIPLTLNSRGNKKTGIDTFGKTIKDITVDVEYETEERLHVKISDKAKKQYLVPDSPLGFERPQIKHYVSPKHSNLDFQYTAKPFSFKVVRKDDKTTIFDTTNMPLVFEDQYLELSTKVPEDANIYGIGEVTAPFRRTHNVTTLWARDNPDDFYRNIYGAHPYYQEVRDGKAHGALLMNAHGMDVITTEGRITYKVIGGILDFYFFAPKSGKPNDLSIAYTDLIGKPMMPSHWMLGWHHCRYGYPNIDKVETVKRKYKEANIPLQTVWVDIDYMEETKDFTFDKVNFPQDRMIGLGEQLHKDGQNYVVMVDPAISANTTYEPYVRGTEMDVWIKNADGSDFIGSVWPGFTTFPDWWHPNATKYWNKEIIDFVDMLGVDGLWIDMNEPASFCLGSCGSGKVDAGNQPYRWTYTEEEQAANHTRWEKELKAMGNPPGEERNLLYPKYAINNGAGNLSEFTVATTALHYGNIPHYDIHNLYGHAESHITRQALIKHKNKIRPFVLTRSSFPGSGKSVGHWTGDNHSFWPYLKNSIANILNFQMFGVSYSGADVCGFNSDTTEELCTRWMEIGAFYPFARNHNNNAAKDQEPYLWESTAEASRIAINTRYEMLPYFYTLFEESNRLGLGVWRPLIFEYPAYEELVSNDVQTLVGSDILLSPVLDEGKTSVKAQFPGGQWYDWYTHELTVDNKSNKKVKTVTLDAPLTHIPIHIRGGAIIPTKTPKYTVGETFATPYNLVIALDKKGQASGRLYIDDGESLEVKSSSGYHFHLQEWSPQGFWQVWLQEGRKDWLHHHYWQARQQVAKGSRWQEDYQIDPWQE.

The first 22 residues, 1–22, serve as a signal peptide directing secretion; the sequence is MAKVSFIFVAIALITGNVLCQT. 3 N-linked (GlcNAc...) asparagine glycosylation sites follow: Asn187, Asn364, and Asn406. The active-site Nucleophile is Asp430. Residue Glu433 is part of the active site. N-linked (GlcNAc...) asparagine glycans are attached at residues Asn466 and Asn500. Residue Asp567 is the Proton donor of the active site. Asn568 and Asn734 each carry an N-linked (GlcNAc...) asparagine glycan.

It belongs to the glycosyl hydrolase 31 family.

It catalyses the reaction Hydrolysis of terminal, non-reducing (1-&gt;4)-linked alpha-D-glucose residues with release of alpha-D-glucose.. Its function is as follows. Hydrolyzes not only malto-oligosaccharides but also soluble starch. The chain is Alpha-glucosidase from Mucor javanicus.